Reading from the N-terminus, the 79-residue chain is Suppressor of tumorigenicity 20 protein (79 aa).

As to expression, expressed in leukocytes, lung, spleen, liver, heart, kidney, muscle and uterine cervix. Down-regulated in cervical cancer.

In terms of biological role, may act as a tumor suppressor. Promotes apoptosis of cancer cells. This is Suppressor of tumorigenicity 20 protein (ST20) from Homo sapiens (Human).